The following is a 156-amino-acid chain: uncharacterized protein (156 aa).

Residues 43-84 (LKIDENEVKLEISVEKLKNLSRVCENIEQVVDKVVEELRYAL) are a coiled coil.

This is an uncharacterized protein from Aquifex aeolicus (strain VF5).